We begin with the raw amino-acid sequence, 125 residues long: Small ribosomal subunit protein eS6 (125 aa).

It belongs to the eukaryotic ribosomal protein eS6 family.

The chain is Small ribosomal subunit protein eS6 from Thermococcus onnurineus (strain NA1).